Reading from the N-terminus, the 918-residue chain is Isoleucine--tRNA ligase (918 aa).

Positions 57-67 (PYANGDIHIGH) match the 'HIGH' region motif. E568 provides a ligand contact to L-isoleucyl-5'-AMP. The 'KMSKS' region motif lies at 609 to 613 (KMSKS). Residue K612 coordinates ATP. Zn(2+) is bound by residues C894, C897, C909, and C912.

The protein belongs to the class-I aminoacyl-tRNA synthetase family. IleS type 1 subfamily. Monomer. Zn(2+) is required as a cofactor.

The protein localises to the cytoplasm. It carries out the reaction tRNA(Ile) + L-isoleucine + ATP = L-isoleucyl-tRNA(Ile) + AMP + diphosphate. Its function is as follows. Catalyzes the attachment of isoleucine to tRNA(Ile). As IleRS can inadvertently accommodate and process structurally similar amino acids such as valine, to avoid such errors it has two additional distinct tRNA(Ile)-dependent editing activities. One activity is designated as 'pretransfer' editing and involves the hydrolysis of activated Val-AMP. The other activity is designated 'posttransfer' editing and involves deacylation of mischarged Val-tRNA(Ile). The polypeptide is Isoleucine--tRNA ligase (Sulfurovum sp. (strain NBC37-1)).